A 235-amino-acid chain; its full sequence is Urease accessory protein UreF (235 aa).

The protein belongs to the UreF family. As to quaternary structure, ureD, UreF and UreG form a complex that acts as a GTP-hydrolysis-dependent molecular chaperone, activating the urease apoprotein by helping to assemble the nickel containing metallocenter of UreC. The UreE protein probably delivers the nickel.

It is found in the cytoplasm. In terms of biological role, required for maturation of urease via the functional incorporation of the urease nickel metallocenter. This is Urease accessory protein UreF from Haemophilus influenzae (strain PittEE).